The chain runs to 574 residues: Kelch-like protein 35 (574 aa).

The BTB domain occupies 40-110; the sequence is TDVVLRAGGR…VYGAGVRLRA (71 aa). In terms of domain architecture, BACK spans 146–248; that stretch reads SLALRRVAAA…APAYFLEKVE (103 aa). Kelch repeat units follow at residues 292 to 341, 343 to 385, 386 to 432, 434 to 480, 481 to 522, and 524 to 570; these read VIVV…ALRN, IYVS…ALQG, QLFA…PCAG, LYVI…SLED, TIYV…VCDG, and VHIL…TIVQ.

The sequence is that of Kelch-like protein 35 (Klhl35) from Mus musculus (Mouse).